Here is a 395-residue protein sequence, read N- to C-terminus: MASIEAALAEIKRGVEELIPEEELIAKLKEGRPLRIKLGADPTAPDIHLGHTVILNKLRAFQDLGHDVTFLIGDFTGMVGDPTGKNSTRPPLTREDVLRNAETYKQQVFKILDPAKTKIQFNSEWLSELGAEGMIRLAANQTVARMLERDDFKKRYAGGQPIAIHEFMYPLLQGYDSVAMETDVELGGTDQKFNLLMGRELQKANGQKPQVVLMMPLLVGLDGEKKMSKSANNYIGVSEAPSEMFGKIMSISDDLMWSYYELLSFRPLEELAQFKADVAAGKNPRDIKVLLAKEIIARFHSEADADAAEQEFVNRFAKNQIPDEMPEFTFAAGTPMANLLKEAELCSSTSEAMRMVKQGAAKMDGEKVEDAKAEPAVGTYVFQVGKRKFARITIA.

The short motif at 42–51 (PTAPDIHLGH) is the 'HIGH' region element. The short motif at 226–230 (KMSKS) is the 'KMSKS' region element. K229 contacts ATP. The S4 RNA-binding domain occupies 334-395 (TPMANLLKEA…KRKFARITIA (62 aa)).

The protein belongs to the class-I aminoacyl-tRNA synthetase family. TyrS type 2 subfamily. In terms of assembly, homodimer.

It localises to the cytoplasm. The enzyme catalyses tRNA(Tyr) + L-tyrosine + ATP = L-tyrosyl-tRNA(Tyr) + AMP + diphosphate + H(+). Functionally, catalyzes the attachment of tyrosine to tRNA(Tyr) in a two-step reaction: tyrosine is first activated by ATP to form Tyr-AMP and then transferred to the acceptor end of tRNA(Tyr). This chain is Tyrosine--tRNA ligase 2, found in Vibrio vulnificus (strain CMCP6).